A 603-amino-acid polypeptide reads, in one-letter code: MAFTSSPSYGSLNAAFWRTIFVVHCISTLVFTTISTPPEDPVKCVSGNTNCTVTNSYGAFPDRSTCRAANVAYPTTEAELISVVAAATKAGRKMRVTTRYSHSITKLACTDGTDGLLISTKFLNHTVRTDATAMTLTVESGVTLRQLIAEAAKVGLALPYAPYWWGLTVGGMMGTGAHGSSLWGKGSAVHDYVTEIRIVSPGSVNDGFAKVRVLRETTTPKEFNAAKVSLGVLGVISQVTLKLQPMFKRSLRYVMRNDSDFGDQAVTFGMKHEFADFIWLPSQGKVVYRMDDRVAVNTSGNGLLDFMPFRSQLSAALAIIRSSEETQERFRDANGKCAGATLITSTLFATSYGLTNNGMIFTGYPVIGSQNRMMSSGSCLDSLHDGLITACPWDSRIKSEFFHQTTFSIPLTQVKSFINDIKSLVKIESKSLCVLELYDGILMRYVTSSPAYLGKETEALDFDLTYYRAKDPLSPRLYEDFIEEIEQIALFKYNALPHWGKNRNLAFDGVIKKYKNVPAFLKVKESYDPMGLFSSEWTDQILGIKGNVTIIKDGCALEGLCVCSEDAHCAPTKGYFCRPGKVYKEARVCTRADDISVIQSLSY.

Residues 1–35 (MAFTSSPSYGSLNAAFWRTIFVVHCISTLVFTTIS) form the signal peptide. The FAD-binding PCMH-type domain maps to 64–246 (STCRAANVAY…SQVTLKLQPM (183 aa)).

This sequence belongs to the oxygen-dependent FAD-linked oxidoreductase family. FAD serves as cofactor.

The enzyme catalyses L-gulono-1,4-lactone + O2 = L-ascorbate + H2O2 + H(+). The protein operates within cofactor biosynthesis; L-ascorbate biosynthesis. In terms of biological role, may be involved in the biosynthesis of ascorbic acid. The chain is Probable L-gulonolactone oxidase 6 from Arabidopsis thaliana (Mouse-ear cress).